A 663-amino-acid chain; its full sequence is Protein KINESIN LIGHT CHAIN-RELATED 2 (663 aa).

Over residues 1–14 the composition is skewed to basic and acidic residues; that stretch reads MDVGESNERVKDDS. Disordered stretches follow at residues 1–24 and 86–146; these read MDVG…RSPL and GESK…KVSV. Residue Ser19 is modified to Phosphoserine. The segment covering 86–100 has biased composition (basic and acidic residues); it reads GESKKEIILEKKEES. Polar residues predominate over residues 102 to 111; that stretch reads GEGSLSQKKP. 11 TPR repeats span residues 147–181, 200–233, 243–276, 285–318, 329–363, 369–402, 411–444, 454–487, 495–528, 537–570, and 579–612; these read DEES…ALRA, VMSL…PMIE, FAGC…QRQV, GETC…HKEN, AADR…SSQN, AAVD…FKQG, ALVY…YLKP, ATGF…YANA, AGIE…FRNS, GIAL…LEKE, and LAVY…REEK.

It belongs to the kinesin light chain family.

This chain is Protein KINESIN LIGHT CHAIN-RELATED 2, found in Arabidopsis thaliana (Mouse-ear cress).